Consider the following 431-residue polypeptide: Histidinol dehydrogenase (431 aa).

NAD(+) contacts are provided by Tyr-130, Gln-191, and Asn-214. Residues Ser-237, Gln-259, and His-262 each coordinate substrate. 2 residues coordinate Zn(2+): Gln-259 and His-262. Catalysis depends on proton acceptor residues Glu-327 and His-328. Positions 328, 361, 415, and 420 each coordinate substrate. Asp-361 contributes to the Zn(2+) binding site. His-420 is a binding site for Zn(2+).

The protein belongs to the histidinol dehydrogenase family. It depends on Zn(2+) as a cofactor.

It catalyses the reaction L-histidinol + 2 NAD(+) + H2O = L-histidine + 2 NADH + 3 H(+). It participates in amino-acid biosynthesis; L-histidine biosynthesis; L-histidine from 5-phospho-alpha-D-ribose 1-diphosphate: step 9/9. Its function is as follows. Catalyzes the sequential NAD-dependent oxidations of L-histidinol to L-histidinaldehyde and then to L-histidine. This chain is Histidinol dehydrogenase, found in Bradyrhizobium diazoefficiens (strain JCM 10833 / BCRC 13528 / IAM 13628 / NBRC 14792 / USDA 110).